The following is a 404-amino-acid chain: Probable oxalate decarboxylase ARB_04859 (404 aa).

Residues Met-1–Ala-17 form the signal peptide. The region spanning Phe-74–Asp-215 is the Cupin type-1 1 domain. Residues His-117, His-119, Glu-123, and His-162 each coordinate Mn(2+). N-linked (GlcNAc...) asparagine glycans are attached at residues Asn-226 and Asn-244. One can recognise a Cupin type-1 2 domain in the interval Phe-249 to Glu-393. Residues His-296, His-298, Glu-303, and His-342 each coordinate Mn(2+). Residue Asn-346 is glycosylated (N-linked (GlcNAc...) asparagine). Glu-357 (proton donor) is an active-site residue.

The cofactor is Mn(2+).

It localises to the secreted. It catalyses the reaction oxalate + H(+) = formate + CO2. In terms of biological role, converts oxalate to formate and CO(2) in an O(2)-dependent reaction. Can also catalyze minor side reactions: oxalate oxidation to produce H(2)O(2), and oxalate-dependent, H(2)O(2)-independent dye oxidations. This is Probable oxalate decarboxylase ARB_04859 from Arthroderma benhamiae (strain ATCC MYA-4681 / CBS 112371) (Trichophyton mentagrophytes).